The primary structure comprises 198 residues: Cyclin-dependent kinase inhibitor 1B (198 aa).

Residues 1 to 11 (MSNVRVSNGSP) are compositionally biased toward polar residues. The segment at 1 to 34 (MSNVRVSNGSPSLERMDARQAEHPKPSACRNLFG) is disordered. The residue at position 10 (Ser10) is a Phosphoserine; by UHMK1. Positions 14 to 25 (ERMDARQAEHPK) are enriched in basic and acidic residues. Positions 51-91 (DMEEASQRKWNFDFQNHKPLEGKYEWQEVEKGSLPEFYYRP) are interaction with CDK2. Tyr74 carries the phosphotyrosine; by SRC modification. A disordered region spans residues 85–198 (PEFYYRPPRP…KKPGLRRRQT (114 aa)). Tyr88 bears the Phosphotyrosine; by ABL, LYN, SRC and JAK2 mark. Tyr89 is modified (phosphotyrosine). The span at 126–137 (EDTHLVDPKTDP) shows a compositional bias: basic and acidic residues. The Nuclear localization signal motif lies at 153-169 (KRPATDDSSTQNKRANR). At Thr157 the chain carries Phosphothreonine; by CaMK1, PKB/AKT1 and PIM1. Thr170 bears the Phosphothreonine mark. Polar residues predominate over residues 175 to 186 (SDGSPNAGSVEQ). Phosphothreonine; by PKB/AKT1, CDK1 and CDK2 is present on Thr187. The residue at position 198 (Thr198) is a Phosphothreonine; by CaMK1, PKB/AKT1, RPS6KA1, RPS6KA3 and PIM1.

The protein belongs to the CDI family. As to quaternary structure, forms a ternary complex composed of CCNE1, CDK2 and CDKN1B. Interacts directly with CCNE1; the interaction is inhibited by CDK2-dependent phosphorylation on Thr-187. Interacts with COPS5, subunit of the COP9 signalosome complex; the interaction leads to CDKN1B degradation. Interacts with NUP50; the interaction leads to nuclear import and degradation of phosphorylated CDKN1B. Interacts with CCND1 and SNX6. Interacts (Thr-198-phosphorylated form) with 14-3-3 proteins, binds strongly YWHAQ, weakly YWHAE and YWHAH, but not YWHAB nor YWHAZ; the interaction with YWHAQ results in translocation to the cytoplasm. Interacts with AKT1 and LYN; the interactions lead to cytoplasmic mislocation, phosphorylation of CDKN1B and inhibition of cell cycle arrest. Forms a ternary complex with CCNA2 and CDK2; CDKN1B inhibits the kinase activity of CDK2 through conformational rearrangements. Interacts (unphosphorylated form) with CDK2. Forms a complex with CDK2 and SPDYA, but does not directly interact with SPDYA. Forms a ternary complex composed of cyclin D, CDK4 and CDKN1B. Interacts (phosphorylated on Tyr-88 and Tyr-89) with CDK4; the interaction is required for cyclin D and CDK4 complex assembly, induces nuclear translocation and activates the CDK4 kinase activity. Interacts with GRB2. Interacts with PIM1. Identified in a complex with SKP1, SKP2 and CKS1B. Interacts with UHMK1; the interaction leads to cytoplasmic mislocation, phosphorylation of CDKN1B and inhibition of cell cycle arrest. Also interacts with CDK1. Dephosphorylated on Thr-187 by PPM1H, leading to CDKN1B stability. Interacts with HSPA8; the interaction may be associated with susceptibility to ubiquitination. Phosphorylated; phosphorylation occurs on serine, threonine and tyrosine residues. Phosphorylation on Ser-10 is the major site of phosphorylation in resting cells, takes place at the G(0)-G(1) phase and leads to protein stability. Phosphorylation on other sites is greatly enhanced by mitogens, growth factors, cMYC and in certain cancer cell lines. The phosphorylated form found in the cytoplasm is inactivate. Phosphorylation on Thr-198 is required for interaction with 14-3-3 proteins. Phosphorylation on Thr-187, by CDK1 and CDK2 leads to protein ubiquitination and proteasomal degradation. Tyrosine phosphorylation promotes this process. Phosphorylation by PKB/AKT1 can be suppressed by LY294002, an inhibitor of the catalytic subunit of PI3K. Phosphorylation on Tyr-88 and Tyr-89 has no effect on binding CDK2, but is required for binding CDK4. Dephosphorylated on tyrosine residues by G-CSF. Post-translationally, ubiquitinated; in the cytoplasm by the KPC complex (composed of RNF123/KPC1 and UBAC1/KPC2) and, in the nucleus, by SCF(SKP2). The latter requires prior phosphorylation on Thr-187. Ubiquitinated; by a TRIM21-containing SCF(SKP2)-like complex; leads to its degradation. In terms of processing, subject to degradation in the lysosome. Interaction with SNX6 promotes lysosomal degradation. As to expression, expressed in kidney (at protein level). Expressed in all tissues tested. Highest levels in skeletal muscle, lowest in liver and kidney.

Its subcellular location is the nucleus. The protein localises to the cytoplasm. The protein resides in the endosome. Functionally, important regulator of cell cycle progression. Inhibits the kinase activity of CDK2 bound to cyclin A, but has little inhibitory activity on CDK2 bound to SPDYA. Involved in G1 arrest. Potent inhibitor of cyclin E- and cyclin A-CDK2 complexes. Forms a complex with cyclin type D-CDK4 complexes and is involved in the assembly, stability, and modulation of CCND1-CDK4 complex activation. Acts either as an inhibitor or an activator of cyclin type D-CDK4 complexes depending on its phosphorylation state and/or stoichometry. The protein is Cyclin-dependent kinase inhibitor 1B of Homo sapiens (Human).